A 356-amino-acid polypeptide reads, in one-letter code: Peptide methionine sulfoxide reductase MsrA/MsrB (356 aa).

Residues 46–199 (HEIYLAGGCF…PNGYCHIDLE (154 aa)) form a peptide methionine sulfoxide reductase A region. C54 is an active-site residue. The MsrB domain occupies 216–339 (DAELKAKLTP…NSAAVKFIPL (124 aa)). The active-site Nucleophile is the C328.

It in the N-terminal section; belongs to the MsrA Met sulfoxide reductase family. This sequence in the C-terminal section; belongs to the MsrB Met sulfoxide reductase family.

It catalyses the reaction L-methionyl-[protein] + [thioredoxin]-disulfide + H2O = L-methionyl-(S)-S-oxide-[protein] + [thioredoxin]-dithiol. The catalysed reaction is [thioredoxin]-disulfide + L-methionine + H2O = L-methionine (S)-S-oxide + [thioredoxin]-dithiol. The enzyme catalyses L-methionyl-[protein] + [thioredoxin]-disulfide + H2O = L-methionyl-(R)-S-oxide-[protein] + [thioredoxin]-dithiol. Has an important function as a repair enzyme for proteins that have been inactivated by oxidation. Catalyzes the reversible oxidation-reduction of methionine sulfoxide in proteins to methionine. In Aggregatibacter actinomycetemcomitans (Actinobacillus actinomycetemcomitans), this protein is Peptide methionine sulfoxide reductase MsrA/MsrB (msrAB).